Reading from the N-terminus, the 180-residue chain is MNLAKIARKIVEYALEGKDYEIPDEIKEKLNYKAGAFTTIKTLDNQLRGCMGIPYPIYPLWQSLKYSALMAAFEDPRFPPLQKEELDNVKFEVTVLTPPRKLIVNNPLEYLEKIKIGKHGIIIKRGPYSGLLLPQVPIEEGWDAKEFLSYGCLKAGLPMDCWLDPKTEVYVFEGQIFEED.

Residues 1-180 form the AMMECR1 domain; sequence MNLAKIARKI…VFEGQIFEED (180 aa).

This is Protein NEQ441 from Nanoarchaeum equitans (strain Kin4-M).